The chain runs to 501 residues: Aspartate--tRNA ligase, cytoplasmic (501 aa).

T52 is subject to Phosphothreonine. K74 bears the N6-acetyllysine mark. Position 229 (E229) interacts with L-aspartate. S249 carries the post-translational modification Phosphoserine. Positions 251-254 (QLYK) are aspartate. R273 is an L-aspartate binding site. ATP-binding positions include 273–275 (RAE) and 281–283 (RHL). K374 is modified (N6-acetyllysine). E424 contacts ATP. Positions 427 and 431 each coordinate L-aspartate. 472–475 (GLER) contacts ATP.

The protein belongs to the class-II aminoacyl-tRNA synthetase family. Type 2 subfamily. In terms of assembly, homodimer. Part of a multisubunit complex that groups tRNA ligases for Arg (RARS1), Asp (DARS1), Gln (QARS1), Ile (IARS1), Leu (LARS1), Lys (KARS1), Met (MARS1) the bifunctional ligase for Glu and Pro (EPRS1) and the auxiliary subunits AIMP1/p43, AIMP2/p38 and EEF1E1/p18.

The protein localises to the cytoplasm. It carries out the reaction tRNA(Asp) + L-aspartate + ATP = L-aspartyl-tRNA(Asp) + AMP + diphosphate. Functionally, catalyzes the specific attachment of an amino acid to its cognate tRNA in a 2 step reaction: the amino acid (AA) is first activated by ATP to form AA-AMP and then transferred to the acceptor end of the tRNA. The chain is Aspartate--tRNA ligase, cytoplasmic (Dars1) from Rattus norvegicus (Rat).